The chain runs to 126 residues: Non-specific lipid-transfer protein 13 (126 aa).

Positions 1 to 20 (MDTHTTKLVAISLLLLLVIS) are cleaved as a signal peptide. Disulfide bonds link C36–C85, C46–C61, C62–C109, and C83–C123.

It belongs to the plant LTP family.

Functionally, plant non-specific lipid-transfer proteins transfer phospholipids as well as galactolipids across membranes. May play a role in wax or cutin deposition in the cell walls of expanding epidermal cells and certain secretory tissues. The polypeptide is Non-specific lipid-transfer protein 13 (LTP13) (Arabidopsis thaliana (Mouse-ear cress)).